The sequence spans 543 residues: Chaperonin GroEL 2 (543 aa).

ATP contacts are provided by residues 29–32 (TLGP), 86–90 (DGTTT), glycine 413, 477–479 (DAA), and aspartate 493. The segment at 523–543 (PQEPEPAAGGHGHGHQHGPGF) is disordered. A compositionally biased stretch (basic residues) spans 534–543 (GHGHQHGPGF).

It belongs to the chaperonin (HSP60) family. As to quaternary structure, forms a cylinder of 14 subunits composed of two heptameric rings stacked back-to-back. Interacts with the co-chaperonin GroES.

Its subcellular location is the cytoplasm. The enzyme catalyses ATP + H2O + a folded polypeptide = ADP + phosphate + an unfolded polypeptide.. Functionally, together with its co-chaperonin GroES, plays an essential role in assisting protein folding. The GroEL-GroES system forms a nano-cage that allows encapsulation of the non-native substrate proteins and provides a physical environment optimized to promote and accelerate protein folding. In Salinispora tropica (strain ATCC BAA-916 / DSM 44818 / JCM 13857 / NBRC 105044 / CNB-440), this protein is Chaperonin GroEL 2.